A 106-amino-acid polypeptide reads, in one-letter code: MNDSEFHRLADALWLTIEERLDNWDGDSDIDCEINGGVLTISFENGSKIIINRQEPLHQVWLATKQGGYHFDLKGDEWICDRSGETFWDLLEQAATQQAGEKVSFR.

Belongs to the frataxin family.

In terms of biological role, involved in iron-sulfur (Fe-S) cluster assembly. May act as a regulator of Fe-S biogenesis. The chain is Iron-sulfur cluster assembly protein CyaY from Salmonella heidelberg (strain SL476).